Consider the following 619-residue polypeptide: Hypermethylated in cancer 2 protein (619 aa).

In terms of domain architecture, BTB spans 46 to 109; that stretch reads CDVIIMVENS…IYTGKLLPSD (64 aa). Phosphoserine occurs at positions 166, 169, and 197. Disordered regions lie at residues 180-293 and 307-426; these read DVRK…VGNS and MDVE…GHTG. The segment covering 214–228 has biased composition (gly residues); it reads LGLGGPAGGEMGLGG. Residues 247-249 form a binding to CtBP region; the sequence is DLS. Positions 281–293 are enriched in polar residues; it reads APTSTSALPVGNS. The span at 337–357 shows a compositional bias: basic and acidic residues; the sequence is KKDWNKKEPVAGSPFDRRETG. Ser-349 and Ser-416 each carry phosphoserine. C2H2-type zinc fingers lie at residues 446–468, 509–531, 537–559, 565–587, and 593–615; these read YVCIPCAKGFPSSEQLNAHVETH, FKCSVCEKTYKDPATLRQHEKTH, FPCNICGKMFTQRGTMTRHMRSH, FACDECGMRFTRQYRLTEHMRVH, and YECQLCGGKFTQQRNLISHLRMH.

The protein belongs to the krueppel C2H2-type zinc-finger protein family. Hic subfamily. In terms of assembly, self-associates. Interacts with HIC1.

The protein resides in the nucleus. In terms of biological role, transcriptional repressor. This Mus musculus (Mouse) protein is Hypermethylated in cancer 2 protein (Hic2).